We begin with the raw amino-acid sequence, 64 residues long: uncharacterized protein (64 aa).

This is an uncharacterized protein from Archaeoglobus fulgidus (strain ATCC 49558 / DSM 4304 / JCM 9628 / NBRC 100126 / VC-16).